Consider the following 687-residue polypeptide: Outer dynein arm-docking complex subunit 1 (687 aa).

3 coiled-coil regions span residues 100 to 193, 222 to 267, and 341 to 421; these read QVRV…YLNV, REEA…LKLK, and INEQ…LFTR. The segment at 126-147 is disordered; it reads SRNSAHSKNARSPGCVQHDKVK. Disordered regions lie at residues 363–388, 487–511, and 540–687; these read VSGR…QRVD, FPKK…AKDD, and ESTP…QSNY. Positions 366-388 are enriched in basic and acidic residues; the sequence is RRSEEDRRAQQEQQRAELQQRVD. Residues 544–556 are compositionally biased toward low complexity; that stretch reads SMTSSTQKVSSSS. 2 stretches are compositionally biased toward polar residues: residues 557–611 and 620–629; these read RLVT…SSRG and RSPNSSSYLG. Over residues 660-680 the composition is skewed to low complexity; that stretch reads SPGPASSPGPASSTGQASSTS.

It belongs to the ODA1/DCC2 family. Component of the outer dynein arm-docking complex along with ODAD2, ODAD3, ODAD4 and CLXN. Interacts with ODAD3. Interacts with ODAD4; this interaction may facilitate the recruitment and/or attachment of outer dynein arm docking complex proteins, including ODAD1, ODAD3, and ODAD4 to ciliary axonemes. Interacts with DNAH9. Interacts with MNS1. Interacts with PIERCE1 and PIERCE2; the interactions link the outer dynein arms docking complex (ODA-DC) to the internal microtubule inner proteins (MIP) in cilium axoneme. As to expression, expressed in trachea multiciliated cells.

The protein localises to the cytoplasm. It localises to the cytoskeleton. The protein resides in the cilium axoneme. Its function is as follows. Component of the outer dynein arm-docking complex (ODA-DC) that mediates outer dynein arms (ODA) binding onto the doublet microtubule. Involved in mediating assembly of both ODAs and their axonemal docking complex onto ciliary microtubules. This Bos taurus (Bovine) protein is Outer dynein arm-docking complex subunit 1 (ODAD1).